The chain runs to 701 residues: ER-retained PMA1-suppressing protein 1 (701 aa).

The N-terminal stretch at 1–27 is a signal peptide; that stretch reads MKMNLKRLVVTFFSCITFLLKFTIAAA. Positions 28-142 constitute a Thioredoxin 1 domain; the sequence is EPPEGFPEPL…LIAFARRESM (115 aa). C60 and C63 are joined by a disulfide. An N-linked (GlcNAc...) asparagine glycan is attached at N85. An intrachain disulfide couples C200 to C203. N264, N299, and N370 each carry an N-linked (GlcNAc...) asparagine glycan. The 39-residue stretch at 408–446 folds into the Thioredoxin 2 domain; sequence PTFFMFKDGDPISYVFPGYSTTEMRNIDAIMDWVKKYSN. Residues 646–666 traverse the membrane as a helical segment; that stretch reads IIHGNGMPGYLIVIVLFIAIL.

This sequence belongs to the protein disulfide isomerase family. As to quaternary structure, interacts with mutated PMA1-D378N but not wild type PMA1. Interacts with EUG1, KAR2, MPD1 and PDI1.

It localises to the endoplasmic reticulum membrane. It carries out the reaction Catalyzes the rearrangement of -S-S- bonds in proteins.. Acts as a membrane-bound chaperone in endoplasmic reticulum quality control. Probably facilitates presentation of substrate to membrane-bound components of the degradation machinery. The chain is ER-retained PMA1-suppressing protein 1 (EPS1) from Saccharomyces cerevisiae (strain ATCC 204508 / S288c) (Baker's yeast).